Reading from the N-terminus, the 390-residue chain is Phosphopentomutase (390 aa).

The Mn(2+) site is built by aspartate 9, aspartate 283, histidine 288, aspartate 324, histidine 325, and histidine 336.

It belongs to the phosphopentomutase family. It depends on Mn(2+) as a cofactor.

The protein resides in the cytoplasm. It catalyses the reaction 2-deoxy-alpha-D-ribose 1-phosphate = 2-deoxy-D-ribose 5-phosphate. The catalysed reaction is alpha-D-ribose 1-phosphate = D-ribose 5-phosphate. The protein operates within carbohydrate degradation; 2-deoxy-D-ribose 1-phosphate degradation; D-glyceraldehyde 3-phosphate and acetaldehyde from 2-deoxy-alpha-D-ribose 1-phosphate: step 1/2. Isomerase that catalyzes the conversion of deoxy-ribose 1-phosphate (dRib-1-P) and ribose 1-phosphate (Rib-1-P) to deoxy-ribose 5-phosphate (dRib-5-P) and ribose 5-phosphate (Rib-5-P), respectively. The sequence is that of Phosphopentomutase from Thermotoga petrophila (strain ATCC BAA-488 / DSM 13995 / JCM 10881 / RKU-1).